The following is a 458-amino-acid chain: tRNA modification GTPase MnmE (458 aa).

(6S)-5-formyl-5,6,7,8-tetrahydrofolate contacts are provided by Arg-22, Glu-85, and Arg-124. The 160-residue stretch at 220-379 (GIKTVIVGRP…LEEHISELVF (160 aa)) folds into the TrmE-type G domain. Asn-230 is a binding site for K(+). GTP contacts are provided by residues 230 to 235 (NVGKSS), 249 to 255 (TEIPGTT), and 274 to 277 (DTAG). A Mg(2+)-binding site is contributed by Ser-234. Residues Thr-249, Ile-251, and Thr-254 each contribute to the K(+) site. Thr-255 is a Mg(2+) binding site. Residue Lys-458 participates in (6S)-5-formyl-5,6,7,8-tetrahydrofolate binding.

This sequence belongs to the TRAFAC class TrmE-Era-EngA-EngB-Septin-like GTPase superfamily. TrmE GTPase family. In terms of assembly, homodimer. Heterotetramer of two MnmE and two MnmG subunits. K(+) serves as cofactor.

It localises to the cytoplasm. Its function is as follows. Exhibits a very high intrinsic GTPase hydrolysis rate. Involved in the addition of a carboxymethylaminomethyl (cmnm) group at the wobble position (U34) of certain tRNAs, forming tRNA-cmnm(5)s(2)U34. This Natranaerobius thermophilus (strain ATCC BAA-1301 / DSM 18059 / JW/NM-WN-LF) protein is tRNA modification GTPase MnmE.